Reading from the N-terminus, the 536-residue chain is Organic anion transporter 3 (536 aa).

At 1 to 11 the chain is on the cytoplasmic side; sequence MTFSEILDRVG. S4 is modified (phosphoserine). Residues 12–32 form a helical membrane-spanning segment; the sequence is SMGPFQYLHVTLLALPVLGIA. Over 33–123 the chain is Extracellular; it reads NHNLLQIFTA…LVCSSNKLKE (91 aa). 2 N-linked (GlcNAc...) asparagine glycosylation sites follow: N81 and N86. The helical transmembrane segment at 124 to 144 threads the bilayer; the sequence is MAQSIFMAGILVGGPVIGELS. Topologically, residues 145-158 are cytoplasmic; sequence DRFGRKPILTWSYL. The helical transmembrane segment at 159 to 179 threads the bilayer; it reads MLAASGSGAAFSPSLPVYMIF. Position 180 (R180) is a topological domain, extracellular. Residues 181-201 form a helical membrane-spanning segment; it reads FLCGCSISGISLSTVILNVEW. Over 202–212 the chain is Cytoplasmic; the sequence is VPTSMRAISST. The chain crosses the membrane as a helical span at residues 213-233; sequence SIGYCYTIGQFILSGLAYAIP. Residues 234–236 are Extracellular-facing; the sequence is QWR. The helical transmembrane segment at 237–257 threads the bilayer; that stretch reads WLQLTSSAPFFIFSLLSWWVP. The Cytoplasmic portion of the chain corresponds to 258-327; it reads ESIRWLVLSG…FRVSILRRVT (70 aa). The helical transmembrane segment at 328 to 348 threads the bilayer; that stretch reads FCLSLAWFSTGFAYYSLAMGV. At 349–354 the chain is on the extracellular side; the sequence is EEFGVN. A helical transmembrane segment spans residues 355-375; sequence IYILQIIFGGVDIPAKFITIL. The Cytoplasmic segment spans residues 376 to 383; it reads SLSYLGRR. The helical transmembrane segment at 384-404 threads the bilayer; it reads ITQSFLLLLAGGAILALIFVP. Topologically, residues 405–411 are extracellular; that stretch reads SEMQLLR. A helical membrane pass occupies residues 412–432; sequence TALAVFGKGCLSGSFSCLFLY. Topologically, residues 433 to 471 are cytoplasmic; that stretch reads TSELYPTVLRQTGMGISNVWARVGSMIAPLVKITGELQP. Residues 472 to 492 form a helical membrane-spanning segment; sequence FIPNVIFGTTALLGGSAAFFL. Residues 493-536 are Extracellular-facing; sequence LETLNRPLPETIEDIQNWHKQVQKTKQESEAEKASQIIPLKTGG. The tract at residues 515-536 is disordered; the sequence is QKTKQESEAEKASQIIPLKTGG.

It belongs to the major facilitator (TC 2.A.1) superfamily. Organic cation transporter (TC 2.A.1.19) family. Expressed in the liver, brain, kidney, choroid plexus and weakly in the eye. Moderately expressed (at protein level) in the brain capillary endothelial cells (BCEC).

The protein resides in the basolateral cell membrane. It carries out the reaction estrone 3-sulfate(out) + glutarate(in) = estrone 3-sulfate(in) + glutarate(out). The catalysed reaction is estrone 3-sulfate(in) + 2-oxoglutarate(out) = estrone 3-sulfate(out) + 2-oxoglutarate(in). It catalyses the reaction glutarate(in) + 2-oxoglutarate(out) = glutarate(out) + 2-oxoglutarate(in). The enzyme catalyses urate(in) + 2-oxoglutarate(out) = urate(out) + 2-oxoglutarate(in). It carries out the reaction taurocholate(out) + glutarate(in) = taurocholate(in) + glutarate(out). The catalysed reaction is dehydroepiandrosterone 3-sulfate(out) + glutarate(in) = dehydroepiandrosterone 3-sulfate(in) + glutarate(out). It catalyses the reaction prostaglandin F2alpha(out) + glutarate(in) = prostaglandin F2alpha(in) + glutarate(out). The enzyme catalyses prostaglandin F2alpha(out) + 2-oxoglutarate(in) = prostaglandin F2alpha(in) + 2-oxoglutarate(out). It carries out the reaction (R)-carnitine(out) + 2-oxoglutarate(in) = (R)-carnitine(in) + 2-oxoglutarate(out). The catalysed reaction is glutarate(in) + (R)-carnitine(out) = glutarate(out) + (R)-carnitine(in). It catalyses the reaction prostaglandin E2(out) + 2-oxoglutarate(in) = prostaglandin E2(in) + 2-oxoglutarate(out). The enzyme catalyses prostaglandin E2(out) + glutarate(in) = prostaglandin E2(in) + glutarate(out). It carries out the reaction urate(in) + glutarate(out) = urate(out) + glutarate(in). The catalysed reaction is taurocholate(out) + 2-oxoglutarate(in) = taurocholate(in) + 2-oxoglutarate(out). It catalyses the reaction dehydroepiandrosterone 3-sulfate(out) + 2-oxoglutarate(in) = dehydroepiandrosterone 3-sulfate(in) + 2-oxoglutarate(out). The enzyme catalyses kynurenate(out) + a dicarboxylate(in) = kynurenate(in) + a dicarboxylate(out). It carries out the reaction (indol-3-yl)acetate(out) + a dicarboxylate(in) = (indol-3-yl)acetate(in) + a dicarboxylate(out). The catalysed reaction is indoxyl sulfate(out) + a dicarboxylate(in) = indoxyl sulfate(in) + a dicarboxylate(out). It catalyses the reaction N-benzoylglycine(out) + a dicarboxylate(in) = N-benzoylglycine(in) + a dicarboxylate(out). The enzyme catalyses 3-carboxy-4-methyl-5-propyl-2-furanpropanoate(out) + a dicarboxylate(in) = 3-carboxy-4-methyl-5-propyl-2-furanpropanoate(in) + a dicarboxylate(out). It carries out the reaction (6R)-L-erythro-5,6,7,8-tetrahydrobiopterin(out) + a dicarboxylate(in) = (6R)-L-erythro-5,6,7,8-tetrahydrobiopterin(in) + a dicarboxylate(out). The catalysed reaction is L-erythro-7,8-dihydrobiopterin(out) + a dicarboxylate(in) = L-erythro-7,8-dihydrobiopterin(in) + a dicarboxylate(out). It catalyses the reaction L-sepiapterin(out) + a dicarboxylate(in) = L-sepiapterin(in) + a dicarboxylate(out). Its function is as follows. Functions as an organic anion/dicarboxylate exchanger that couples organic anion uptake indirectly to the sodium gradient. Transports organic anions such as estrone 3-sulfate (E1S) and urate in exchange for dicarboxylates such as glutarate or ketoglutarate (2-oxoglutarate). Plays an important role in the excretion of endogenous and exogenous organic anions, especially from the kidney and the brain. E1S transport is pH- and chloride-dependent and may also involve E1S/cGMP exchange. Responsible for the transport of prostaglandin E2 (PGE2) and prostaglandin F2(alpha) (PGF2(alpha)) in the basolateral side of the renal tubule. Involved in the transport of neuroactive tryptophan metabolites kynurenate and xanthurenate. Functions as a biopterin transporters involved in the uptake and the secretion of coenzymes tetrahydrobiopterin (BH4), dihydrobiopterin (BH2) and sepiapterin to urine, thereby determining baseline levels of blood biopterins. May be involved in the basolateral transport of steviol, a metabolite of the popular sugar substitute stevioside. May participate in the detoxification/ renal excretion of drugs and xenobiotics, such as the histamine H(2)-receptor antagonists fexofenadine and cimetidine, the antibiotic benzylpenicillin (PCG), the anionic herbicide 2,4-dichloro-phenoxyacetate (2,4-D), the diagnostic agent p-aminohippurate (PAH), the antiviral acyclovir (ACV), and the mycotoxin ochratoxin (OTA), by transporting these exogenous organic anions across the cell membrane in exchange for dicarboxylates such as 2-oxoglutarate. Contributes to the renal uptake of potent uremic toxins (indoxyl sulfate (IS), indole acetate (IA), hippurate/N-benzoylglycine (HA) and 3-carboxy-4-methyl-5-propyl-2-furanpropionate (CMPF)), pravastatin, PCG, E1S and dehydroepiandrosterone sulfate (DHEAS), and is partly involved in the renal uptake of temocaprilat (an angiotensin-converting enzyme (ACE) inhibitor). May contribute to the release of cortisol in the adrenals. Involved in one of the detoxification systems on the choroid plexus (CP), removes substrates such as E1S or taurocholate (TC), PCG, 2,4-D and PAH, from the cerebrospinal fluid (CSF) to the blood for eventual excretion in urine and bile. Regulates the CSF concentration of histamine H(2)-receptor antagonists cimetidine and ranitidine at the CP. Also contributes to the uptake of several other organic compounds such as the prostanoids prostaglandin E(2) and prostaglandin F(2-alpha), L-carnitine, and the therapeutic drugs allopurinol, 6-mercaptopurine (6-MP) and 5-fluorouracil (5-FU). Mediates the uptake from brain of organic anions, such as E1S, PAH, and OTA. Mediates the transport of PAH, PCG, and the statins pravastatin and pitavastatin, from the cerebrum into the blood circulation across the blood-brain barrier (BBB). In summary, plays a role in the efflux of drugs and xenobiotics, helping reduce their undesired toxicological effects on the body. The sequence is that of Organic anion transporter 3 (Slc22a8) from Rattus norvegicus (Rat).